The chain runs to 591 residues: Aspartate--tRNA(Asp/Asn) ligase (591 aa).

E176 is a binding site for L-aspartate. The interval 200–203 (QLFK) is aspartate. R222 lines the L-aspartate pocket. ATP contacts are provided by residues 222-224 (RDE) and Q231. H450 is an L-aspartate binding site. An ATP-binding site is contributed by E484. Position 491 (R491) interacts with L-aspartate. 536–539 (GLDR) lines the ATP pocket.

This sequence belongs to the class-II aminoacyl-tRNA synthetase family. Type 1 subfamily. As to quaternary structure, homodimer.

The protein localises to the cytoplasm. The enzyme catalyses tRNA(Asx) + L-aspartate + ATP = L-aspartyl-tRNA(Asx) + AMP + diphosphate. Its function is as follows. Aspartyl-tRNA synthetase with relaxed tRNA specificity since it is able to aspartylate not only its cognate tRNA(Asp) but also tRNA(Asn). Reaction proceeds in two steps: L-aspartate is first activated by ATP to form Asp-AMP and then transferred to the acceptor end of tRNA(Asp/Asn). The sequence is that of Aspartate--tRNA(Asp/Asn) ligase from Bacillus cereus (strain G9842).